The chain runs to 815 residues: Lon protease 1 (815 aa).

The Lon N-terminal domain occupies 19 to 212; that stretch reads MPLLPLRDIV…KLFGQIRSEI (194 aa). An ATP-binding site is contributed by 364–371; sequence GPPGVGKT. The Lon proteolytic domain occupies 601–782; sequence KDEIGLAVGL…DDVLRKAMVV (182 aa). Catalysis depends on residues Ser-688 and Lys-731. A disordered region spans residues 793 to 815; that stretch reads EAGAQQAVMFEQKPPAADEIRAH.

Belongs to the peptidase S16 family. In terms of assembly, homohexamer. Organized in a ring with a central cavity.

It localises to the cytoplasm. The catalysed reaction is Hydrolysis of proteins in presence of ATP.. ATP-dependent serine protease that mediates the selective degradation of mutant and abnormal proteins as well as certain short-lived regulatory proteins. Required for cellular homeostasis and for survival from DNA damage and developmental changes induced by stress. Degrades polypeptides processively to yield small peptide fragments that are 5 to 10 amino acids long. Binds to DNA in a double-stranded, site-specific manner. The sequence is that of Lon protease 1 from Syntrophobacter fumaroxidans (strain DSM 10017 / MPOB).